The following is a 751-amino-acid chain: Phosphate transporter PHO1 homolog 8 (751 aa).

The SPX domain maps to Met1 to Glu299. The Cytoplasmic portion of the chain corresponds to Met1–Thr351. Residues Phe352–Ile372 traverse the membrane as a helical segment. Residues His373–Pro392 lie on the Extracellular side of the membrane. The chain crosses the membrane as a helical span at residues Leu393–Phe413. The Cytoplasmic portion of the chain corresponds to Trp414–Gly434. The helical transmembrane segment at Tyr435 to Val455 threads the bilayer. Residues Asn456–Glu473 are Extracellular-facing. Residues Leu474–Phe494 traverse the membrane as a helical segment. The Cytoplasmic segment spans residues Tyr495–Lys623. The 194-residue stretch at Lys558 to Ser751 folds into the EXS domain. The helical transmembrane segment at Ile624–Tyr644 threads the bilayer. The Extracellular segment spans residues Asp645–Ser667. The helical transmembrane segment at Val668 to Leu688 threads the bilayer. Over Asp689 to Ser751 the chain is Cytoplasmic.

This sequence belongs to the SYG1 (TC 2.A.94) family. In terms of tissue distribution, expressed in root epidermis, leaf hydathodes, trichomes and petioles, stem vascular cylinder, receptacle, stigma apex and pollen grains.

It localises to the cell membrane. In terms of biological role, may transport inorganic phosphate (Pi). This chain is Phosphate transporter PHO1 homolog 8 (PHO1-H8), found in Arabidopsis thaliana (Mouse-ear cress).